A 156-amino-acid chain; its full sequence is Arginine repressor (156 aa).

It belongs to the ArgR family.

It is found in the cytoplasm. It participates in amino-acid biosynthesis; L-arginine biosynthesis [regulation]. In terms of biological role, regulates arginine biosynthesis genes. The sequence is that of Arginine repressor from Vibrio cholerae serotype O1 (strain ATCC 39315 / El Tor Inaba N16961).